Here is a 337-residue protein sequence, read N- to C-terminus: Probable cytosolic iron-sulfur protein assembly protein 1 (337 aa).

WD repeat units lie at residues 11-50 (LHND…ENLL), 57-96 (VHKK…LEEG), 109-148 (GHEN…EEYE), 155-194 (EHSQ…WECA), 199-240 (GHEG…EDDQ), 252-290 (AHRS…SEVS), and 301-337 (AHTV…NYQD).

Belongs to the WD repeat CIA1 family. As to quaternary structure, interacts with NAR1.

The protein resides in the cytoplasm. It is found in the nucleus. In terms of biological role, essential component of the cytosolic iron-sulfur (Fe/S) protein assembly machinery. Required for the maturation of extramitochondrial Fe/S proteins. This is Probable cytosolic iron-sulfur protein assembly protein 1 from Candida glabrata (strain ATCC 2001 / BCRC 20586 / JCM 3761 / NBRC 0622 / NRRL Y-65 / CBS 138) (Yeast).